Reading from the N-terminus, the 78-residue chain is Major outer membrane lipoprotein Lpp (78 aa).

An N-terminal signal peptide occupies residues 1–20 (MKATKLVLGAVILGSTLLAG). Cysteine 21 carries N-palmitoyl cysteine lipidation. Cysteine 21 carries S-diacylglycerol cysteine lipidation. 2 consecutive repeats follow at residues 24 to 34 (NAKIDQLSSDV) and 38 to 48 (NAKVDQLSNDV). A coiled-coil region spans residues 27–75 (IDQLSSDVQTLNAKVDQLSNDVNAMRSDVQAAKDDAARANQRLDNMATK). At lysine 78 the chain carries N6-murein peptidoglycan lysine.

Belongs to the Lpp family. Homotrimer.

It localises to the cell outer membrane. Its subcellular location is the secreted. The protein resides in the cell wall. Its function is as follows. A highly abundant outer membrane lipoprotein that controls the distance between the inner and outer membranes. The only protein known to be covalently linked to the peptidoglycan network (PGN). Also non-covalently binds the PGN. The link between the cell outer membrane and PGN contributes to maintenance of the structural and functional integrity of the cell envelope, and maintains the correct distance between the PGN and the outer membrane. This is Major outer membrane lipoprotein Lpp from Shigella flexneri.